We begin with the raw amino-acid sequence, 473 residues long: Mogroside IIIx synthase (473 aa).

The Proton acceptor role is filled by histidine 43. The active-site Charge relay is aspartate 142. Residues serine 293, glutamine 356, tryptophan 374, asparagine 375, serine 376, glutamate 379, aspartate 395, and glutamine 396 each contribute to the UDP-alpha-D-glucose site.

This sequence belongs to the UDP-glycosyltransferase family. As to expression, highly expressed in mature fruits.

It catalyses the reaction mogroside IIE + UDP-alpha-D-glucose = mogroside IIIX + UDP + H(+). The catalysed reaction is mogroside III + UDP-alpha-D-glucose = mogroside IV + UDP + H(+). It carries out the reaction mogroside III + UDP-alpha-D-glucose = siamenoside I + UDP + H(+). The enzyme catalyses mogroside IIIX + UDP-alpha-D-glucose = mogroside IVA + UDP + H(+). It catalyses the reaction mogroside IIIX + UDP-alpha-D-glucose = siamenoside I + UDP + H(+). The catalysed reaction is mogroside IV + UDP-alpha-D-glucose = mogroside V + UDP + H(+). It carries out the reaction siamenoside I + UDP-alpha-D-glucose = mogroside V + UDP + H(+). The enzyme catalyses mogroside V + UDP-alpha-D-glucose = mogroside VI + UDP + H(+). It functions in the pathway secondary metabolite biosynthesis; terpenoid biosynthesis. Its activity is regulated as follows. Activity is increased by Mg(2+). In terms of biological role, UDP-glycosyltransferase involved in the biosynthesis of cucurbitacin and mogroside tetracyclic triterpene natural products (e.g. siamenoside I and mogrosides IV, V and VI). Cucurbitacins have cytotoxic properties and exhibit deterrent taste as a defense barrier against herbivores. Mogrosides are nonsugar highly oxygenated compounds used as high-intensity zero-calorie sweeteners; they also possess pharmacological properties such as regulating immunity, lowering blood sugar and lipid levels, protecting the liver, and acting as antioxidants and antitumor agents. Catalyzes the branched glucosylations of mogroside II-E, mogroside III, mogroside IIIx, mogroside IV, mogroside IV-A, siamenoside I and mogroside V, ending in the production of mogroside VI. Functionally, catalyzes the beta(1-6) branched glucosylations of mogroside II-E to produce mogroside IIIx by forming a beta(1-6) glycosidic bond with the 6-hydroxyl of glucose 1-C24; a subsequent glycosylation at glucose 1-C3 leads to the formation of mogroside IV-A with beta(1-6) glycosidic bond. Can also use mogroside III-E, mogroside III-A, mogroside IV-E and mogroside IV-A as substrates. The polypeptide is Mogroside IIIx synthase (Siraitia grosvenorii (Monk's fruit)).